We begin with the raw amino-acid sequence, 362 residues long: Probable dual-specificity RNA methyltransferase RlmN (362 aa).

E105 (proton acceptor) is an active-site residue. Residues 111–344 form the Radical SAM core domain; that stretch reads HEYGNSICVT…VTIRREQGHD (234 aa). C118 and C349 are joined by a disulfide. C125, C129, and C132 together coordinate [4Fe-4S] cluster. Residues 175-176, S207, 230-232, and N306 each bind S-adenosyl-L-methionine; these read GE and SLH. The active-site S-methylcysteine intermediate is C349.

This sequence belongs to the radical SAM superfamily. RlmN family. [4Fe-4S] cluster is required as a cofactor.

The protein resides in the cytoplasm. It catalyses the reaction adenosine(2503) in 23S rRNA + 2 reduced [2Fe-2S]-[ferredoxin] + 2 S-adenosyl-L-methionine = 2-methyladenosine(2503) in 23S rRNA + 5'-deoxyadenosine + L-methionine + 2 oxidized [2Fe-2S]-[ferredoxin] + S-adenosyl-L-homocysteine. The catalysed reaction is adenosine(37) in tRNA + 2 reduced [2Fe-2S]-[ferredoxin] + 2 S-adenosyl-L-methionine = 2-methyladenosine(37) in tRNA + 5'-deoxyadenosine + L-methionine + 2 oxidized [2Fe-2S]-[ferredoxin] + S-adenosyl-L-homocysteine. Its function is as follows. Specifically methylates position 2 of adenine 2503 in 23S rRNA and position 2 of adenine 37 in tRNAs. This Bacillus cytotoxicus (strain DSM 22905 / CIP 110041 / 391-98 / NVH 391-98) protein is Probable dual-specificity RNA methyltransferase RlmN.